We begin with the raw amino-acid sequence, 239 residues long: Purine nucleoside phosphorylase DeoD-type 1 (239 aa).

Residue H5 coordinates a purine D-ribonucleoside. Phosphate contacts are provided by residues G21, R25, R44, and R88–S91. A purine D-ribonucleoside-binding positions include E180–E182 and S204–D205. The Proton donor role is filled by D205.

This sequence belongs to the PNP/UDP phosphorylase family. In terms of assembly, homohexamer; trimer of homodimers.

The catalysed reaction is a purine D-ribonucleoside + phosphate = a purine nucleobase + alpha-D-ribose 1-phosphate. It catalyses the reaction a purine 2'-deoxy-D-ribonucleoside + phosphate = a purine nucleobase + 2-deoxy-alpha-D-ribose 1-phosphate. Functionally, catalyzes the reversible phosphorolytic breakdown of the N-glycosidic bond in the beta-(deoxy)ribonucleoside molecules, with the formation of the corresponding free purine bases and pentose-1-phosphate. The polypeptide is Purine nucleoside phosphorylase DeoD-type 1 (Vibrio parahaemolyticus serotype O3:K6 (strain RIMD 2210633)).